The primary structure comprises 630 residues: YTH domain-containing family protein 1 (630 aa).

Disordered stretches follow at residues 38 to 113 (DMTQ…YMQQ), 160 to 183 (YYPQGAQFPNHGPMPQNSMLAGPY), and 200 to 241 (QVGD…QSGH). A compositionally biased stretch (polar residues) spans 70–102 (PGQQQQHQYGSPPNTNGNAQPMPQAHGNNTMNS). One can recognise a YTH domain in the interval 382–590 (EKYFILKSLT…SVGRKLTGLF (209 aa)).

This sequence belongs to the YTHDF family. YTHDF1 subfamily.

Its subcellular location is the cytoplasm. The protein resides in the P-body. Functionally, specifically recognizes and binds N6-methyladenosine (m6A)-containing mRNAs, and regulates their stability. M6A is a modification present at internal sites of mRNAs and some non-coding RNAs and plays a role in mRNA stability and processing. Plays a role in pathogenicity towards plant host. The chain is YTH domain-containing family protein 1 from Pyricularia oryzae (strain 70-15 / ATCC MYA-4617 / FGSC 8958) (Rice blast fungus).